The primary structure comprises 330 residues: Aspartate--ammonia ligase (330 aa).

This sequence belongs to the class-II aminoacyl-tRNA synthetase family. AsnA subfamily.

It is found in the cytoplasm. The catalysed reaction is L-aspartate + NH4(+) + ATP = L-asparagine + AMP + diphosphate + H(+). Its pathway is amino-acid biosynthesis; L-asparagine biosynthesis; L-asparagine from L-aspartate (ammonia route): step 1/1. This Streptococcus equi subsp. equi (strain 4047) protein is Aspartate--ammonia ligase.